The primary structure comprises 140 residues: Protein BIC1 (140 aa).

A compositionally biased stretch (polar residues) spans Met1–Pro10. The interval Met1–Lys71 is disordered. The segment covering Ala42–Glu68 has biased composition (basic and acidic residues).

In terms of assembly, interacts with CRY2 in both darkness and light.

Its subcellular location is the nucleus. Regulates the blue-light dependent dimerization of CRY2 and formation of photobodies. Interacts with photoexited CRY2 to inhibit its activity. Inhibits CRY phosphorylation. This Arabidopsis thaliana (Mouse-ear cress) protein is Protein BIC1.